Reading from the N-terminus, the 621-residue chain is 1-deoxy-D-xylulose-5-phosphate synthase (621 aa).

Thiamine diphosphate is bound by residues His-80 and 121–123 (GHS). Asp-152 serves as a coordination point for Mg(2+). Thiamine diphosphate contacts are provided by residues 153–154 (GA), Asn-181, Tyr-288, and Glu-370. Position 181 (Asn-181) interacts with Mg(2+).

Belongs to the transketolase family. DXPS subfamily. In terms of assembly, homodimer. It depends on Mg(2+) as a cofactor. Requires thiamine diphosphate as cofactor.

It catalyses the reaction D-glyceraldehyde 3-phosphate + pyruvate + H(+) = 1-deoxy-D-xylulose 5-phosphate + CO2. Its pathway is metabolic intermediate biosynthesis; 1-deoxy-D-xylulose 5-phosphate biosynthesis; 1-deoxy-D-xylulose 5-phosphate from D-glyceraldehyde 3-phosphate and pyruvate: step 1/1. Functionally, catalyzes the acyloin condensation reaction between C atoms 2 and 3 of pyruvate and glyceraldehyde 3-phosphate to yield 1-deoxy-D-xylulose-5-phosphate (DXP). The chain is 1-deoxy-D-xylulose-5-phosphate synthase from Erwinia tasmaniensis (strain DSM 17950 / CFBP 7177 / CIP 109463 / NCPPB 4357 / Et1/99).